A 202-amino-acid polypeptide reads, in one-letter code: Small ribosomal subunit protein uS4 (202 aa).

Positions 1-13 (MSRYRGPRLRITR) are enriched in basic residues. The disordered stretch occupies residues 1 to 43 (MSRYRGPRLRITRRLGDLPGLTRKAAKRSHPPGQHGQARRKRS). An S4 RNA-binding domain is found at 90–152 (NRLDNVCFRL…KASKQLAQAN (63 aa)).

This sequence belongs to the universal ribosomal protein uS4 family. In terms of assembly, part of the 30S ribosomal subunit. Contacts protein S5. The interaction surface between S4 and S5 is involved in control of translational fidelity.

In terms of biological role, one of the primary rRNA binding proteins, it binds directly to 16S rRNA where it nucleates assembly of the body of the 30S subunit. With S5 and S12 plays an important role in translational accuracy. This is Small ribosomal subunit protein uS4 from Prochlorococcus marinus (strain NATL2A).